The sequence spans 619 residues: uncharacterized protein (619 aa).

The first 21 residues, 1–21 (MKKLIAIIAVAAVVIAGFVFT), serve as a signal peptide directing secretion.

This is an uncharacterized protein from Archaeoglobus fulgidus (strain ATCC 49558 / DSM 4304 / JCM 9628 / NBRC 100126 / VC-16).